The primary structure comprises 217 residues: 3-demethoxyubiquinol 3-hydroxylase (217 aa).

Residues Glu-66, Glu-96, His-99, Glu-148, Glu-180, and His-183 each coordinate Fe cation.

This sequence belongs to the COQ7 family. The cofactor is Fe cation.

It localises to the cell membrane. It carries out the reaction a 5-methoxy-2-methyl-3-(all-trans-polyprenyl)benzene-1,4-diol + AH2 + O2 = a 3-demethylubiquinol + A + H2O. Its pathway is cofactor biosynthesis; ubiquinone biosynthesis. Functionally, catalyzes the hydroxylation of 2-nonaprenyl-3-methyl-6-methoxy-1,4-benzoquinol during ubiquinone biosynthesis. The chain is 3-demethoxyubiquinol 3-hydroxylase from Xanthomonas euvesicatoria pv. vesicatoria (strain 85-10) (Xanthomonas campestris pv. vesicatoria).